A 341-amino-acid polypeptide reads, in one-letter code: 5-formaminoimidazole-4-carboxamide-1-(beta)-D-ribofuranosyl 5'-monophosphate synthetase (341 aa).

5-amino-1-(5-phospho-beta-D-ribosyl)imidazole-4-carboxamide is bound by residues H10 and T77. One can recognise an ATP-grasp domain in the interval D106–I317. ATP is bound by residues D132–Y188 and E210. Residue N238 participates in 5-amino-1-(5-phospho-beta-D-ribosyl)imidazole-4-carboxamide binding. Residues E277 and E290 each contribute to the Mg(2+) site.

The protein belongs to the phosphohexose mutase family. The cofactor is Mg(2+). It depends on Mn(2+) as a cofactor.

The enzyme catalyses 5-amino-1-(5-phospho-beta-D-ribosyl)imidazole-4-carboxamide + formate + ATP = 5-formamido-1-(5-phospho-D-ribosyl)imidazole-4-carboxamide + ADP + phosphate. The protein operates within purine metabolism; IMP biosynthesis via de novo pathway; 5-formamido-1-(5-phospho-D-ribosyl)imidazole-4-carboxamide from 5-amino-1-(5-phospho-D-ribosyl)imidazole-4-carboxamide (formate route): step 1/1. In terms of biological role, catalyzes the ATP- and formate-dependent formylation of 5-aminoimidazole-4-carboxamide-1-beta-d-ribofuranosyl 5'-monophosphate (AICAR) to 5-formaminoimidazole-4-carboxamide-1-beta-d-ribofuranosyl 5'-monophosphate (FAICAR) in the absence of folates. This chain is 5-formaminoimidazole-4-carboxamide-1-(beta)-D-ribofuranosyl 5'-monophosphate synthetase, found in Cenarchaeum symbiosum (strain A).